Consider the following 161-residue polypeptide: 2-C-methyl-D-erythritol 2,4-cyclodiphosphate synthase (161 aa).

Asp8 and His10 together coordinate a divalent metal cation. Residues 8–10 and 34–35 each bind 4-CDP-2-C-methyl-D-erythritol 2-phosphate; these read DLH and HS. A divalent metal cation is bound at residue His42. 4-CDP-2-C-methyl-D-erythritol 2-phosphate contacts are provided by residues 56 to 58, 100 to 106, and Arg142; these read DIG and AEYPKML.

This sequence belongs to the IspF family. Homotrimer. A divalent metal cation is required as a cofactor.

The catalysed reaction is 4-CDP-2-C-methyl-D-erythritol 2-phosphate = 2-C-methyl-D-erythritol 2,4-cyclic diphosphate + CMP. It participates in isoprenoid biosynthesis; isopentenyl diphosphate biosynthesis via DXP pathway; isopentenyl diphosphate from 1-deoxy-D-xylulose 5-phosphate: step 4/6. Involved in the biosynthesis of isopentenyl diphosphate (IPP) and dimethylallyl diphosphate (DMAPP), two major building blocks of isoprenoid compounds. Catalyzes the conversion of 4-diphosphocytidyl-2-C-methyl-D-erythritol 2-phosphate (CDP-ME2P) to 2-C-methyl-D-erythritol 2,4-cyclodiphosphate (ME-CPP) with a corresponding release of cytidine 5-monophosphate (CMP). In Buchnera aphidicola subsp. Acyrthosiphon pisum (strain 5A), this protein is 2-C-methyl-D-erythritol 2,4-cyclodiphosphate synthase.